The following is a 92-amino-acid chain: Putative septation protein SpoVG (92 aa).

It belongs to the SpoVG family.

In terms of biological role, could be involved in septation. The protein is Putative septation protein SpoVG of Thermoanaerobacter pseudethanolicus (strain ATCC 33223 / 39E) (Clostridium thermohydrosulfuricum).